Consider the following 867-residue polypeptide: Cadherin-related family member 1 (867 aa).

The N-terminal stretch at Met-1–Ser-21 is a signal peptide. At Val-22–Gly-707 the chain is on the extracellular side. 6 consecutive Cadherin domains span residues Asn-39 to Phe-138, Leu-139 to Phe-250, Val-251 to Phe-357, Pro-363 to Phe-476, Ser-477 to Phe-580, and Asp-572 to Ala-692. Residues Val-708–Phe-728 form a helical membrane-spanning segment. Topologically, residues Trp-729 to Tyr-867 are cytoplasmic. Positions Glu-777–Gly-825 are disordered. The segment covering Pro-795–Leu-809 has biased composition (pro residues).

As to expression, expressed in photoreceptor cells of the outer nuclear layer of the retina and in the pinal gland.

It localises to the membrane. Potential calcium-dependent cell-adhesion protein. This Xenopus laevis (African clawed frog) protein is Cadherin-related family member 1 (cdhr1).